Consider the following 284-residue polypeptide: Tropomyosin Tod p 1.0102 (284 aa).

A coiled-coil region spans residues 15-273 (KEVATDKAEQ…KERYKSISDE (259 aa)). The tract at residues 103–136 (EERLTSAQSKLEDASKAADESERGRKVLENRSQG) is disordered.

Belongs to the tropomyosin family. Homodimer. In terms of processing, the N-terminus is blocked. Expressed in mantle muscle (at protein level).

Functionally, tropomyosin, in association with the troponin complex, plays a central role in the calcium dependent regulation of muscle contraction. In Todarodes pacificus (Japanese flying squid), this protein is Tropomyosin Tod p 1.0102.